We begin with the raw amino-acid sequence, 302 residues long: Cell division protein FtsQ (302 aa).

Residues 1–43 (MRPVDKKPVDRKIERETRYLRRDPAPSRWSYRYQRLMLTPAFR) lie on the Cytoplasmic side of the membrane. Residues 44–64 (AGVRLGTPVIIIALAVAVVFG) traverse the membrane as a helical segment. The Periplasmic portion of the chain corresponds to 65–302 (RADSRDWIMG…SMPGRSAGRG (238 aa)). Residues 89–156 (FMVGSFAITG…GVLQIVIEER (68 aa)) enclose the POTRA domain.

Belongs to the FtsQ/DivIB family. FtsQ subfamily.

Its subcellular location is the cell inner membrane. Functionally, essential cell division protein. This chain is Cell division protein FtsQ, found in Ketogulonicigenium vulgare (strain Y25).